The sequence spans 330 residues: Chromatin modification-related protein EAF3 (330 aa).

Positions 5–62 constitute a Tudor-knot domain; the sequence is DGEKVLCFHGPLIYAAKILKAEKWTGEENVTGQVGPHYLVHYDGWKKTWDEWVPETRL. The interval 96-129 is disordered; sequence TSAASSLKRAKDSELPDRKSASRGTKRSREHVEA. The segment covering 104–115 has biased composition (basic and acidic residues); that stretch reads RAKDSELPDRKS. The MRG domain maps to 135–329; sequence KRPEVKISLP…ASPAYHRISS (195 aa).

It belongs to the MRG family. In terms of assembly, component of the NuA4 histone acetyltransferase complex.

The protein resides in the nucleus. Its function is as follows. Involved in deacetylation of histones, chromatin assembly and chromosome segregation. May act as a transcriptional oscillator, directing histone deacetylases to specific chromosomal domains. Component of the NuA4 histone acetyltransferase complex which is involved in transcriptional activation of selected genes principally by acetylation of nucleosomal histone H4 and H2A. The NuA4 complex is also involved in DNA repair. In Mycosarcoma maydis (Corn smut fungus), this protein is Chromatin modification-related protein EAF3 (EAF3).